Consider the following 469-residue polypeptide: 3-isopropylmalate dehydratase large subunit (469 aa).

Cys-349, Cys-410, and Cys-413 together coordinate [4Fe-4S] cluster.

The protein belongs to the aconitase/IPM isomerase family. LeuC type 1 subfamily. In terms of assembly, heterodimer of LeuC and LeuD. It depends on [4Fe-4S] cluster as a cofactor.

The enzyme catalyses (2R,3S)-3-isopropylmalate = (2S)-2-isopropylmalate. It functions in the pathway amino-acid biosynthesis; L-leucine biosynthesis; L-leucine from 3-methyl-2-oxobutanoate: step 2/4. Catalyzes the isomerization between 2-isopropylmalate and 3-isopropylmalate, via the formation of 2-isopropylmaleate. The chain is 3-isopropylmalate dehydratase large subunit from Aromatoleum aromaticum (strain DSM 19018 / LMG 30748 / EbN1) (Azoarcus sp. (strain EbN1)).